We begin with the raw amino-acid sequence, 388 residues long: Probable fatty acid desaturase DES1 (388 aa).

Positions 1 to 33 are disordered; that stretch reads MATTPMTVVDHEAEEAVAKAREDDKSRQVDAFD. Residues 9 to 30 show a composition bias toward basic and acidic residues; the sequence is VDHEAEEAVAKAREDDKSRQVD. The next 2 membrane-spanning stretches (helical) occupy residues 62–82 and 85–105; these read LWYV…AAAM and WAVW…FFVL. The Histidine box-1 motif lies at 107 to 111; that stretch reads HDCGH. A helical membrane pass occupies residues 119–139; that stretch reads TLNSVVGHLLHSFILIPYHGW. The Histidine box-2 signature appears at 143–147; sequence HRTHH. Transmembrane regions (helical) follow at residues 177-194, 226-246, and 248-268; these read IRFT…YLFY, WCIM…LQVL, and MYGL…YLHH. Positions 310 to 314 match the Histidine box-3 motif; it reads HVIHH.

Belongs to the fatty acid desaturase type 1 family. In terms of tissue distribution, highly expressed in root hair cells. Barely detected in panicle, shoot apex, stems and leaves.

The protein resides in the membrane. It functions in the pathway lipid metabolism; polyunsaturated fatty acid biosynthesis. This chain is Probable fatty acid desaturase DES1, found in Sorghum bicolor (Sorghum).